The following is a 225-amino-acid chain: uncharacterized protein (225 aa).

Helical transmembrane passes span 40–60 (LISLAAVFFCHSGMEALLSIV), 63–83 (LAFFHAGTALSSLLASLPFSF), 151–171 (LSETNLSIVFCILTTSSLTIL), and 176–196 (IFSLLLVVCTSACFSSAIVSL).

The protein localises to the membrane. This is an uncharacterized protein from Saccharomyces cerevisiae (strain ATCC 204508 / S288c) (Baker's yeast).